The sequence spans 343 residues: Cytoplasmic tRNA 2-thiolation protein 1 (343 aa).

Belongs to the TtcA family. CTU1/NCS6/ATPBD3 subfamily.

It is found in the cytoplasm. Its pathway is tRNA modification; 5-methoxycarbonylmethyl-2-thiouridine-tRNA biosynthesis. Plays a central role in 2-thiolation of mcm(5)S(2)U at tRNA wobble positions of tRNA(Lys), tRNA(Glu) and tRNA(Gln). Directly binds tRNAs and probably acts by catalyzing adenylation of tRNAs, an intermediate required for 2-thiolation. It is unclear whether it acts as a sulfurtransferase that transfers sulfur from thiocarboxylated URM1 onto the uridine of tRNAs at wobble position. This chain is Cytoplasmic tRNA 2-thiolation protein 1, found in Drosophila yakuba (Fruit fly).